Reading from the N-terminus, the 509-residue chain is Light-independent protochlorophyllide reductase subunit B (509 aa).

Asp36 is a binding site for [4Fe-4S] cluster. The Proton donor role is filled by Asp295. 430-431 (GM) is a binding site for substrate.

The protein belongs to the ChlB/BchB/BchZ family. Protochlorophyllide reductase is composed of three subunits; ChlL, ChlN and ChlB. Forms a heterotetramer of two ChlB and two ChlN subunits. [4Fe-4S] cluster is required as a cofactor.

It is found in the plastid. The protein localises to the chloroplast. It carries out the reaction chlorophyllide a + oxidized 2[4Fe-4S]-[ferredoxin] + 2 ADP + 2 phosphate = protochlorophyllide a + reduced 2[4Fe-4S]-[ferredoxin] + 2 ATP + 2 H2O. It functions in the pathway porphyrin-containing compound metabolism; chlorophyll biosynthesis (light-independent). Component of the dark-operative protochlorophyllide reductase (DPOR) that uses Mg-ATP and reduced ferredoxin to reduce ring D of protochlorophyllide (Pchlide) to form chlorophyllide a (Chlide). This reaction is light-independent. The NB-protein (ChlN-ChlB) is the catalytic component of the complex. This chain is Light-independent protochlorophyllide reductase subunit B, found in Mesostigma viride (Green alga).